Reading from the N-terminus, the 435-residue chain is 3-phosphoshikimate 1-carboxyvinyltransferase (435 aa).

3-phosphoshikimate-binding residues include lysine 23, serine 24, and arginine 28. Lysine 23 serves as a coordination point for phosphoenolpyruvate. Positions 97 and 125 each coordinate phosphoenolpyruvate. The 3-phosphoshikimate site is built by serine 170, serine 171, glutamine 172, serine 198, aspartate 315, asparagine 338, and lysine 342. Glutamine 172 is a phosphoenolpyruvate binding site. Aspartate 315 functions as the Proton acceptor in the catalytic mechanism. Arginine 346, arginine 388, and lysine 413 together coordinate phosphoenolpyruvate.

This sequence belongs to the EPSP synthase family. As to quaternary structure, monomer.

The protein localises to the cytoplasm. It catalyses the reaction 3-phosphoshikimate + phosphoenolpyruvate = 5-O-(1-carboxyvinyl)-3-phosphoshikimate + phosphate. It participates in metabolic intermediate biosynthesis; chorismate biosynthesis; chorismate from D-erythrose 4-phosphate and phosphoenolpyruvate: step 6/7. Its function is as follows. Catalyzes the transfer of the enolpyruvyl moiety of phosphoenolpyruvate (PEP) to the 5-hydroxyl of shikimate-3-phosphate (S3P) to produce enolpyruvyl shikimate-3-phosphate and inorganic phosphate. This Buchnera aphidicola subsp. Cinara cedri (strain Cc) protein is 3-phosphoshikimate 1-carboxyvinyltransferase.